Reading from the N-terminus, the 307-residue chain is Elongation factor Ts (307 aa).

Positions Thr-79–Val-82 are involved in Mg(2+) ion dislocation from EF-Tu.

This sequence belongs to the EF-Ts family.

It localises to the cytoplasm. Associates with the EF-Tu.GDP complex and induces the exchange of GDP to GTP. It remains bound to the aminoacyl-tRNA.EF-Tu.GTP complex up to the GTP hydrolysis stage on the ribosome. The chain is Elongation factor Ts (tsf) from Bartonella quintana (strain Toulouse) (Rochalimaea quintana).